We begin with the raw amino-acid sequence, 321 residues long: Aspartate carbamoyltransferase catalytic subunit (321 aa).

Arginine 57 and threonine 58 together coordinate carbamoyl phosphate. Lysine 85 is an L-aspartate binding site. 3 residues coordinate carbamoyl phosphate: arginine 107, histidine 142, and glutamine 145. Positions 175 and 229 each coordinate L-aspartate. Carbamoyl phosphate contacts are provided by glycine 270 and proline 271.

It belongs to the aspartate/ornithine carbamoyltransferase superfamily. ATCase family. In terms of assembly, heterododecamer (2C3:3R2) of six catalytic PyrB chains organized as two trimers (C3), and six regulatory PyrI chains organized as three dimers (R2).

The enzyme catalyses carbamoyl phosphate + L-aspartate = N-carbamoyl-L-aspartate + phosphate + H(+). It participates in pyrimidine metabolism; UMP biosynthesis via de novo pathway; (S)-dihydroorotate from bicarbonate: step 2/3. In terms of biological role, catalyzes the condensation of carbamoyl phosphate and aspartate to form carbamoyl aspartate and inorganic phosphate, the committed step in the de novo pyrimidine nucleotide biosynthesis pathway. The chain is Aspartate carbamoyltransferase catalytic subunit from Mycobacterium leprae (strain TN).